A 311-amino-acid chain; its full sequence is Serpentine receptor class gamma-6 (311 aa).

7 helical membrane-spanning segments follow: residues 24–44 (MGQL…IYVI), 58–78 (FWLL…FDIF), 101–121 (PLLI…KMVA), 148–168 (LTAC…NILI), 200–220 (YMQI…AILW), 235–255 (IWFA…YLHM), and 266–286 (IFML…VIMI).

This sequence belongs to the nematode receptor-like protein srg family.

The protein resides in the membrane. The chain is Serpentine receptor class gamma-6 (srg-6) from Caenorhabditis elegans.